The following is a 337-amino-acid chain: CMP-sialic acid transporter (337 aa).

The Cytoplasmic segment spans residues 1–9; it reads MAAPRDNVT. A helical transmembrane segment spans residues 10–30; the sequence is LLFKLYCLAVMTLMAAVYTIA. The Lumenal segment spans residues 31 to 45; that stretch reads LRYTRTSDKELYFST. The helical transmembrane segment at 46–64 threads the bilayer; the sequence is TAVCITEVIKLLLSVGILA. CMP-N-acetyl-beta-neuraminate is bound at residue lysine 55. Over 65 to 87 the chain is Cytoplasmic; the sequence is KETGSLGRFKASLRENVLGSPKE. Residues 88 to 108 form a helical membrane-spanning segment; the sequence is LLKLSVPSLVYAVQNNMAFLA. 101–102 lines the CMP-N-acetyl-beta-neuraminate pocket; that stretch reads QN. Residues 109-114 are Lumenal-facing; that stretch reads LSNLDA. The chain crosses the membrane as a helical span at residues 115-135; the sequence is AVYQVTYQLKIPCTALCTVLM. Residue 117 to 124 coordinates CMP-N-acetyl-beta-neuraminate; the sequence is YQVTYQLK. Topologically, residues 136–141 are cytoplasmic; the sequence is LNRTLS. Residues 142 to 160 traverse the membrane as a helical segment; sequence KLQWVSVFMLCAGVTLVQW. Residues 161 to 175 lie on the Lumenal side of the membrane; it reads KPAQATKVVVEQNPL. A helical membrane pass occupies residues 176-196; it reads LGFGAIAIAVLCSGFAGVYFE. Serine 188 is a binding site for CMP-N-acetyl-beta-neuraminate. Residues 197-209 lie on the Cytoplasmic side of the membrane; the sequence is KVLKSSDTSLWVR. A CMP-N-acetyl-beta-neuraminate-binding site is contributed by 210 to 214; the sequence is NIQMY. Residues 210-228 traverse the membrane as a helical segment; sequence NIQMYLSGIIVTLAGVYLS. At 229 to 243 the chain is on the lumenal side; it reads DGAEIKEKGFFYGYT. A helical membrane pass occupies residues 244–262; sequence YYVWFVIFLASVGGLYTSV. The Cytoplasmic portion of the chain corresponds to 263–269; that stretch reads VVKYTDN. A helical membrane pass occupies residues 270–288; that stretch reads IMKGFSAAAAIVLSTIASV. Residue lysine 272 coordinates CMP-N-acetyl-beta-neuraminate. The Lumenal portion of the chain corresponds to 289–296; that stretch reads MLFGLQIT. Residues 297–315 form a helical membrane-spanning segment; that stretch reads LTFALGTLLVCVSIYLYGL. Residues 316–337 are Cytoplasmic-facing; the sequence is PRQDTTSIQQGETASKERVIGV. Residues 316-337 form a disordered region; sequence PRQDTTSIQQGETASKERVIGV.

The protein belongs to the nucleotide-sugar transporter family. SLC35A subfamily. In terms of assembly, monomer.

Its subcellular location is the golgi apparatus membrane. The protein resides in the golgi apparatus. The enzyme catalyses CMP-N-acetyl-beta-neuraminate(in) + CMP(out) = CMP-N-acetyl-beta-neuraminate(out) + CMP(in). It catalyses the reaction CMP-N-acetyl-beta-neuraminate(in) + AMP(out) = CMP-N-acetyl-beta-neuraminate(out) + AMP(in). It carries out the reaction CDP-L-ribitol(in) + CDP(out) = CDP-L-ribitol(out) + CDP(in). The catalysed reaction is UMP(out) + CMP-N-acetyl-beta-neuraminate(in) = UMP(in) + CMP-N-acetyl-beta-neuraminate(out). Functionally, transports CMP-sialic acid from the cytosol into the Golgi apparatus, functioning as an antiporter that exchanges CMP-sialic acid for CMP. Binds both CMP-sialic acid and free CMP, but has higher affinity for free CMP. Also able to exchange CMP-sialic acid for AMP and UMP. Also mediates the transport of CDP-ribitol. This Homo sapiens (Human) protein is CMP-sialic acid transporter.